The chain runs to 509 residues: Bifunctional purine biosynthesis protein PurH (509 aa).

An MGS-like domain is found at 1–144 (MKRALISVSD…KNYAAVTVVV (144 aa)).

Belongs to the PurH family.

It catalyses the reaction (6R)-10-formyltetrahydrofolate + 5-amino-1-(5-phospho-beta-D-ribosyl)imidazole-4-carboxamide = 5-formamido-1-(5-phospho-D-ribosyl)imidazole-4-carboxamide + (6S)-5,6,7,8-tetrahydrofolate. The enzyme catalyses IMP + H2O = 5-formamido-1-(5-phospho-D-ribosyl)imidazole-4-carboxamide. It functions in the pathway purine metabolism; IMP biosynthesis via de novo pathway; 5-formamido-1-(5-phospho-D-ribosyl)imidazole-4-carboxamide from 5-amino-1-(5-phospho-D-ribosyl)imidazole-4-carboxamide (10-formyl THF route): step 1/1. Its pathway is purine metabolism; IMP biosynthesis via de novo pathway; IMP from 5-formamido-1-(5-phospho-D-ribosyl)imidazole-4-carboxamide: step 1/1. The sequence is that of Bifunctional purine biosynthesis protein PurH from Listeria monocytogenes serotype 4b (strain CLIP80459).